The chain runs to 82 residues: Putative membrane protein insertion efficiency factor (82 aa).

The protein belongs to the UPF0161 family.

It is found in the cell inner membrane. Could be involved in insertion of integral membrane proteins into the membrane. This is Putative membrane protein insertion efficiency factor from Rickettsia massiliae (strain Mtu5).